The chain runs to 479 residues: Glutamyl-tRNA(Gln) amidotransferase subunit A (479 aa).

Residues Lys-75 and Ser-150 each act as charge relay system in the active site. Ser-174 serves as the catalytic Acyl-ester intermediate.

Belongs to the amidase family. GatA subfamily. As to quaternary structure, heterotrimer of A, B and C subunits.

The enzyme catalyses L-glutamyl-tRNA(Gln) + L-glutamine + ATP + H2O = L-glutaminyl-tRNA(Gln) + L-glutamate + ADP + phosphate + H(+). In terms of biological role, allows the formation of correctly charged Gln-tRNA(Gln) through the transamidation of misacylated Glu-tRNA(Gln) in organisms which lack glutaminyl-tRNA synthetase. The reaction takes place in the presence of glutamine and ATP through an activated gamma-phospho-Glu-tRNA(Gln). In Synechococcus sp. (strain ATCC 27144 / PCC 6301 / SAUG 1402/1) (Anacystis nidulans), this protein is Glutamyl-tRNA(Gln) amidotransferase subunit A.